The sequence spans 92 residues: Indole-3-acetic acid-induced protein ARG7 (92 aa).

The protein belongs to the ARG7 family.

This is Indole-3-acetic acid-induced protein ARG7 (ARG7) from Vigna radiata var. radiata (Mung bean).